Consider the following 196-residue polypeptide: Probable malonic semialdehyde reductase RutE (196 aa).

This sequence belongs to the nitroreductase family. HadB/RutE subfamily. The cofactor is FMN.

It catalyses the reaction 3-hydroxypropanoate + NADP(+) = 3-oxopropanoate + NADPH + H(+). Its function is as follows. May reduce toxic product malonic semialdehyde to 3-hydroxypropionic acid, which is excreted. This chain is Probable malonic semialdehyde reductase RutE, found in Escherichia coli O81 (strain ED1a).